Here is a 187-residue protein sequence, read N- to C-terminus: Shikimate kinase (187 aa).

ATP is bound at residue 18-23; that stretch reads GCGKST. Ser22 contacts Mg(2+). Positions 40, 64, and 86 each coordinate substrate. Residue Arg128 participates in ATP binding. Arg147 contacts substrate. Arg164 contributes to the ATP binding site.

The protein belongs to the shikimate kinase family. Monomer. Mg(2+) serves as cofactor.

The protein localises to the cytoplasm. The catalysed reaction is shikimate + ATP = 3-phosphoshikimate + ADP + H(+). Its pathway is metabolic intermediate biosynthesis; chorismate biosynthesis; chorismate from D-erythrose 4-phosphate and phosphoenolpyruvate: step 5/7. Functionally, catalyzes the specific phosphorylation of the 3-hydroxyl group of shikimic acid using ATP as a cosubstrate. The protein is Shikimate kinase of Rhodopirellula baltica (strain DSM 10527 / NCIMB 13988 / SH1).